Consider the following 573-residue polypeptide: MLO-like protein 11 (573 aa).

The Extracellular portion of the chain corresponds to 1 to 19; the sequence is MGEGEENGNEADSNERSLA. A helical transmembrane segment spans residues 20-40; the sequence is LSPTWSVAIVLTVFVVVSLIV. At 41–69 the chain is on the cytoplasmic side; it reads ERSIYRLSTWLRKTKRKPMFAALEKMKEE. Residues 70 to 90 traverse the membrane as a helical segment; the sequence is LMLLGFISLLLTATSSTIANI. Residues 91-163 are Extracellular-facing; that stretch reads CVPSSFYNDR…SYEGLEQLHR (73 aa). A helical membrane pass occupies residues 164 to 184; that stretch reads FIFIMAVTHVTYSCLTMLLAI. At 185–287 the chain is on the cytoplasmic side; that stretch reads VKIHSWRIWE…IRSMEEEFQR (103 aa). 2 consecutive transmembrane segments (helical) span residues 288 to 308 and 309 to 329; these read IVGV…FNIK and GSNL…LVGA. The Cytoplasmic portion of the chain corresponds to 330-371; that stretch reads KLQHVIATLALENAGLTEYPSGVKLRPRDELFWFNKPELLLS. The chain crosses the membrane as a helical span at residues 372–392; the sequence is LIHFILFQNSFELASFFWFWW. The Extracellular segment spans residues 393–411; the sequence is QFGYSSCFLKNHYLVYFRL. The chain crosses the membrane as a helical span at residues 412–432; the sequence is LLGFAGQFLCSYSTLPLYALV. At 433–573 the chain is on the cytoplasmic side; the sequence is TQMGTNYKAA…SSSLPSEKRV (141 aa). A calmodulin-binding region spans residues 446-467; it reads QRIRETIRGWGKATRRKRRHGL. Disordered stretches follow at residues 500-532 and 554-573; these read EQQR…TSSR and RSEP…EKRV. Low complexity predominate over residues 507–516; it reads EQGTTELELQ. Polar residues predominate over residues 561–573; the sequence is LSRSSSLPSEKRV.

Belongs to the MLO family.

The protein resides in the membrane. Functionally, may be involved in modulation of pathogen defense and leaf cell death. Activity seems to be regulated by Ca(2+)-dependent calmodulin binding and seems not to require heterotrimeric G proteins. This chain is MLO-like protein 11 (MLO11), found in Arabidopsis thaliana (Mouse-ear cress).